Consider the following 1023-residue polypeptide: 2-oxoglutarate dehydrogenase complex component E1 (1023 aa).

The transit peptide at 1 to 40 directs the protein to the mitochondrion; that stretch reads MFHLRTCAAKLRPLTASQTVKTFSQNKPAAIRTFQQIRCY. N6-succinyllysine is present on Lys-74. A Phosphoserine modification is found at Ser-100. Ca(2+)-binding residues include His-143, Asp-156, and Asp-158. Thiamine diphosphate is bound at residue Arg-312. Lys-401 carries the N6-acetyllysine modification. Residues Asp-411, Asn-444, and Ile-446 each contribute to the thiamine diphosphate site. Mg(2+)-binding residues include Asp-411, Asn-444, and Ile-446. Lys-534 participates in a covalent cross-link: Glycyl lysine isopeptide (Lys-Gly) (interchain with G-Cter in ubiquitin). Lys-564 bears the N6-succinyllysine mark. Residue Gln-676 coordinates thiamine diphosphate. A recognized by alloreactive CD8 cytotoxic T-lymphocytes in association with a class I MHC protein region spans residues 933–939; it reads LSPFPFD. Lys-970 bears the N6-acetyllysine mark.

Belongs to the alpha-ketoglutarate dehydrogenase family. As to quaternary structure, homodimer. The 2-oxoglutarate dehydrogenase complex is composed of OGDH (2-oxoglutarate dehydrogenase; E1), DLST (dihydrolipoamide succinyltransferase; E2), DLD (dihydrolipoamide dehydrogenase; E3) and the assembly factor KGD4. It contains multiple copies of the three enzymatic components (E1, E2 and E3). In the nucleus, the 2-oxoglutarate dehydrogenase complex associates with KAT2A. Interacts with ABHD11; this interaction maintains the functional lipoylation of the 2-oxoglutarate dehydrogenase complex. The cofactor is thiamine diphosphate. Mg(2+) is required as a cofactor.

The protein localises to the mitochondrion. It is found in the nucleus. The enzyme catalyses N(6)-[(R)-lipoyl]-L-lysyl-[protein] + 2-oxoglutarate + H(+) = N(6)-[(R)-S(8)-succinyldihydrolipoyl]-L-lysyl-[protein] + CO2. With respect to regulation, calcium ions and ADP stimulate, whereas ATP and NADH reduce catalytic activity. 2-oxoglutarate dehydrogenase (E1o) component of the 2-oxoglutarate dehydrogenase complex (OGDHC). Participates in the first step, rate limiting for the overall conversion of 2-oxoglutarate to succinyl-CoA and CO(2) catalyzed by the whole OGDHC. Catalyzes the irreversible decarboxylation of 2-oxoglutarate (alpha-ketoglutarate) via the thiamine diphosphate (ThDP) cofactor and subsequent transfer of the decarboxylated acyl intermediate on an oxidized dihydrolipoyl group that is covalently amidated to the E2 enzyme (dihydrolipoyllysine-residue succinyltransferase or DLST). Plays a key role in the Krebs (citric acid) cycle, which is a common pathway for oxidation of fuel molecules, including carbohydrates, fatty acids, and amino acids. Can catalyze the decarboxylation of 2-oxoadipate in vitro, but at a much lower rate than 2-oxoglutarate. Mainly active in the mitochondrion. A fraction of the 2-oxoglutarate dehydrogenase complex also localizes in the nucleus and is required for lysine succinylation of histones: associates with KAT2A on chromatin and provides succinyl-CoA to histone succinyltransferase KAT2A. The chain is 2-oxoglutarate dehydrogenase complex component E1 from Mus musculus (Mouse).